The chain runs to 353 residues: Rhodopsin (353 aa).

Residues 1 to 36 (MNGTEGPYFYVPMVNTSGIVRSPYEYPQYYLVNPAA) lie on the Extracellular side of the membrane. Asparagine 2 and asparagine 15 each carry an N-linked (GlcNAc...) asparagine glycan. Residues 37–61 (YAALGAYMFLLILVGFPINFLTLYV) form a helical membrane-spanning segment. The Cytoplasmic portion of the chain corresponds to 62 to 73 (TIEHKKLRTPLN). The chain crosses the membrane as a helical span at residues 74–96 (YILLNLAVADLFMVFGGFTTTMY). Residues 97–110 (TSMHGYFVLGRLGC) lie on the Extracellular side of the membrane. A disulfide bridge connects residues cysteine 110 and cysteine 187. The helical transmembrane segment at 111-133 (NIEGFFATLGGEIALWSLVVLAI) threads the bilayer. A 'Ionic lock' involved in activated form stabilization motif is present at residues 134–136 (ERW). At 134–152 (ERWVVVCKPISNFRFGENH) the chain is on the cytoplasmic side. Residues 153–173 (AIMGLAFTWLMALACAAPPLV) form a helical membrane-spanning segment. Topologically, residues 174-202 (GWSRYIPEGMQCSCGIDYYTRAEGFNNES) are extracellular. Residue asparagine 200 is glycosylated (N-linked (GlcNAc...) asparagine). Residues 203–224 (FVIYMFICHFSIPLLVVFFCYG) form a helical membrane-spanning segment. At 225 to 252 (RLLCAVKEAAAAQQESETTQRAEREVTR) the chain is on the cytoplasmic side. Residues 253 to 274 (MVIMMVIAFLVCWLPYASVAWW) form a helical membrane-spanning segment. The Extracellular segment spans residues 275–286 (IFTHQGSDFGPV). The helical transmembrane segment at 287–308 (FMTIPAFFAKSSSIYNPMIYIC) threads the bilayer. An N6-(retinylidene)lysine modification is found at lysine 296. The Cytoplasmic portion of the chain corresponds to 309–353 (LNKQFRHCMITTLCCGKNPFEEEEGASTASKTEASSVSSSSVSPA). Residues cysteine 322 and cysteine 323 are each lipidated (S-palmitoyl cysteine). The segment at 331-353 (EEGASTASKTEASSVSSSSVSPA) is disordered. A compositionally biased stretch (low complexity) spans 334-353 (ASTASKTEASSVSSSSVSPA).

This sequence belongs to the G-protein coupled receptor 1 family. Opsin subfamily. Post-translationally, phosphorylated on some or all of the serine and threonine residues present in the C-terminal region. In terms of processing, contains one covalently linked retinal chromophore.

It is found in the membrane. Its subcellular location is the cell projection. The protein resides in the cilium. The protein localises to the photoreceptor outer segment. In terms of biological role, photoreceptor required for image-forming vision at low light intensity. While most salt water fish species use retinal as chromophore, most freshwater fish use 3-dehydroretinal, or a mixture of retinal and 3-dehydroretinal. Light-induced isomerization of 11-cis to all-trans retinal triggers a conformational change that activates signaling via G-proteins. Subsequent receptor phosphorylation mediates displacement of the bound G-protein alpha subunit by arrestin and terminates signaling. The sequence is that of Rhodopsin (rho) from Diplodus vulgaris (Common two-banded seabream).